Consider the following 217-residue polypeptide: Putative thymidylate synthase (217 aa).

Cys-139 is a catalytic residue.

Belongs to the thymidylate synthase family. Archaeal-type ThyA subfamily. Monomer.

The protein localises to the cytoplasm. The protein operates within pyrimidine metabolism; dTTP biosynthesis. In terms of biological role, may catalyze the biosynthesis of dTMP using an unknown cosubstrate. The protein is Putative thymidylate synthase of Methanococcoides burtonii (strain DSM 6242 / NBRC 107633 / OCM 468 / ACE-M).